The chain runs to 526 residues: Cholesterol side-chain cleavage enzyme, mitochondrial (526 aa).

The transit peptide at 1–36 (MLAKGLSLRSVLVKGCQPFLSPTWQGPVLSTGKGAG) directs the protein to the mitochondrion. The segment covering 30-41 (STGKGAGTSTSS) has biased composition (low complexity). A disordered region spans residues 30 to 49 (STGKGAGTSTSSPRSFNEIP). C458 is a binding site for heme.

This sequence belongs to the cytochrome P450 family. As to quaternary structure, interacts with FDX1/adrenodoxin. It depends on heme as a cofactor.

It localises to the mitochondrion inner membrane. It catalyses the reaction 6 reduced [adrenodoxin] + cholesterol + 3 O2 + 6 H(+) = 4-methylpentanal + pregnenolone + 6 oxidized [adrenodoxin] + 4 H2O. It carries out the reaction 2 reduced [adrenodoxin] + cholesterol + O2 + 2 H(+) = (22R)-hydroxycholesterol + 2 oxidized [adrenodoxin] + H2O. The catalysed reaction is (22R)-hydroxycholesterol + 2 reduced [adrenodoxin] + O2 + 2 H(+) = (20R,22R)-20,22-dihydroxycholesterol + 2 oxidized [adrenodoxin] + H2O. The enzyme catalyses (20R,22R)-20,22-dihydroxycholesterol + 2 reduced [adrenodoxin] + O2 + 2 H(+) = 4-methylpentanal + pregnenolone + 2 oxidized [adrenodoxin] + 2 H2O. It functions in the pathway lipid metabolism; C21-steroid hormone metabolism. Its pathway is steroid metabolism; cholesterol metabolism. Its function is as follows. A cytochrome P450 monooxygenase that catalyzes the side-chain hydroxylation and cleavage of cholesterol to pregnenolone, the precursor of most steroid hormones. Catalyzes three sequential oxidation reactions of cholesterol, namely the hydroxylation at C22 followed with the hydroxylation at C20 to yield 20R,22R-hydroxycholesterol that is further cleaved between C20 and C22 to yield the C21-steroid pregnenolone and 4-methylpentanal. Mechanistically, uses molecular oxygen inserting one oxygen atom into a substrate and reducing the second into a water molecule. Two electrons are provided by NADPH via a two-protein mitochondrial transfer system comprising flavoprotein FDXR (adrenodoxin/ferredoxin reductase) and nonheme iron-sulfur protein FDX1 or FDX2 (adrenodoxin/ferredoxin). The chain is Cholesterol side-chain cleavage enzyme, mitochondrial from Mus musculus (Mouse).